Here is a 470-residue protein sequence, read N- to C-terminus: Argininosuccinate lyase (470 aa).

It belongs to the lyase 1 family. Argininosuccinate lyase subfamily.

It is found in the cytoplasm. The catalysed reaction is 2-(N(omega)-L-arginino)succinate = fumarate + L-arginine. The protein operates within amino-acid biosynthesis; L-arginine biosynthesis; L-arginine from L-ornithine and carbamoyl phosphate: step 3/3. The polypeptide is Argininosuccinate lyase (Mycobacterium tuberculosis (strain ATCC 25618 / H37Rv)).